The sequence spans 409 residues: Peptidase T (409 aa).

His78 is a binding site for Zn(2+). Residue Asp80 is part of the active site. Zn(2+) is bound at residue Asp140. Glu173 acts as the Proton acceptor in catalysis. Positions 174, 196, and 379 each coordinate Zn(2+).

This sequence belongs to the peptidase M20B family. Zn(2+) serves as cofactor.

It localises to the cytoplasm. It catalyses the reaction Release of the N-terminal residue from a tripeptide.. Its function is as follows. Cleaves the N-terminal amino acid of tripeptides. The protein is Peptidase T of Salmonella agona (strain SL483).